Consider the following 222-residue polypeptide: MSSSESIRMVLIGPPGAGKGTQAPNLQERFHAAHLATGDMLRSQIAKGTQLGLEAKKIMDQGGLVSDDIMVNMIKDELTNNPACKNGFILDGFPRTIPQAEKLDQMLKEQGTPLEKAIELKVDDELLVARITGRLIHPASGRSYHKIFNPPKEDMKDDVTGEALVQRSDDNADALKKRLAAYHAQTEPIVDFYKKTGIWAGVDASQPPATVWADILNKLGKN.

A propeptide (removed in mature form) is located at residue Ser-2. 2 positions are modified to N-acetylserine: Ser-2 and Ser-3. 16-21 (GAGKGT) is an ATP binding site. The segment at 36 to 65 (ATGDMLRSQIAKGTQLGLEAKKIMDQGGLV) is NMP. AMP contacts are provided by residues Thr-37, Arg-42, 63 to 65 (GLV), 92 to 95 (GFPR), and Gln-99. An LID region spans residues 133-170 (GRLIHPASGRSYHKIFNPPKEDMKDDVTGEALVQRSDD). ATP contacts are provided by residues Arg-134 and 143–144 (SY). Arg-167 and Arg-178 together coordinate AMP. Gln-206 serves as a coordination point for ATP.

It belongs to the adenylate kinase family. AK2 subfamily. As to quaternary structure, monomer.

Its subcellular location is the cytoplasm. The protein resides in the cytosol. It is found in the mitochondrion intermembrane space. The enzyme catalyses AMP + ATP = 2 ADP. Catalyzes the reversible transfer of the terminal phosphate group between ATP and AMP. Plays an important role in cellular energy homeostasis and in adenine nucleotide metabolism. Adenylate kinase activity is critical for regulation of the phosphate utilization and the AMP de novo biosynthesis pathways. The polypeptide is Adenylate kinase (Saccharomyces cerevisiae (strain YJM789) (Baker's yeast)).